Consider the following 97-residue polypeptide: Large ribosomal subunit protein uL23 (97 aa).

The protein belongs to the universal ribosomal protein uL23 family. In terms of assembly, part of the 50S ribosomal subunit. Contacts protein L29, and trigger factor when it is bound to the ribosome.

Functionally, one of the early assembly proteins it binds 23S rRNA. One of the proteins that surrounds the polypeptide exit tunnel on the outside of the ribosome. Forms the main docking site for trigger factor binding to the ribosome. The protein is Large ribosomal subunit protein uL23 of Pelagibacter ubique (strain HTCC1062).